The chain runs to 211 residues: Imidazole glycerol phosphate synthase subunit HisH (211 aa).

The 208-residue stretch at 4 to 211 folds into the Glutamine amidotransferase type-1 domain; that stretch reads RVVILDYGSG…QLLANWVATL (208 aa). C82 (nucleophile) is an active-site residue. Active-site residues include H192 and E194.

As to quaternary structure, heterodimer of HisH and HisF.

It localises to the cytoplasm. It carries out the reaction 5-[(5-phospho-1-deoxy-D-ribulos-1-ylimino)methylamino]-1-(5-phospho-beta-D-ribosyl)imidazole-4-carboxamide + L-glutamine = D-erythro-1-(imidazol-4-yl)glycerol 3-phosphate + 5-amino-1-(5-phospho-beta-D-ribosyl)imidazole-4-carboxamide + L-glutamate + H(+). The catalysed reaction is L-glutamine + H2O = L-glutamate + NH4(+). It functions in the pathway amino-acid biosynthesis; L-histidine biosynthesis; L-histidine from 5-phospho-alpha-D-ribose 1-diphosphate: step 5/9. In terms of biological role, IGPS catalyzes the conversion of PRFAR and glutamine to IGP, AICAR and glutamate. The HisH subunit catalyzes the hydrolysis of glutamine to glutamate and ammonia as part of the synthesis of IGP and AICAR. The resulting ammonia molecule is channeled to the active site of HisF. This is Imidazole glycerol phosphate synthase subunit HisH from Thermobifida fusca (strain YX).